A 110-amino-acid polypeptide reads, in one-letter code: uncharacterized protein (110 aa).

It localises to the mitochondrion. This is an uncharacterized protein from Arabidopsis thaliana (Mouse-ear cress).